Here is a 552-residue protein sequence, read N- to C-terminus: uncharacterized protein (552 aa).

Position 29–36 (29–36 (GENAWGKS)) interacts with ATP. A Toprim domain is found at 379–469 (RCWLLVEGET…AEREHLTALP (91 aa)).

This is an uncharacterized protein from Escherichia coli (strain K12).